The following is a 432-amino-acid chain: MFRPDLDDIPALGSETSSLDNTVENGNYRVKLWRDKSGIRSPPSTFCTWFKQYQIGLSLGSLLLLILMFTCLPYYDNVSGTYTRGRDDLAFIFSGVVLFTALRAISMIYLLEPLARLCGVHKKLMVRFTEQGWLVIHHSLFWTTGMYINYNSEYWMDLDGVWSGFPERTMTGLTKGYYLLQLAFWLQQIVVVNFEKRRKDYSQMLTHHLITSVLLATSYSYYQTKVGNVILCLVDIVDVLFAFAKLLKYLGFQYACDVAFCVFLASWLVARHGLYLLVCWSIFTILPTVMPYGCYDTISGNRLSEFPADGGNEIMREVLQAFRDPGGPVCFNSRIGWAFLGLLVGLQVLMLIWLGMILKVAYKVFQGEGADDTRSDSEESGYGTSDHEGDCYGAQAGNPKVIRQFVASREKVHIEQAENQGLHLRQQKRSAR.

A helical transmembrane segment spans residues 55–75 (IGLSLGSLLLLILMFTCLPYY). N-linked (GlcNAc...) asparagine glycosylation is present at Asn-77. 7 helical membrane passes run 91–111 (FIFS…IYLL), 128–148 (FTEQ…GMYI), 172–192 (GLTK…IVVV), 226–246 (VGNV…FAKL), 250–270 (LGFQ…WLVA), 273–293 (GLYL…MPYG), and 338–358 (AFLG…GMIL). The TLC domain maps to 123–366 (KLMVRFTEQG…ILKVAYKVFQ (244 aa)). Positions 370–395 (ADDTRSDSEESGYGTSDHEGDCYGAQ) are disordered.

Belongs to the sphingosine N-acyltransferase family.

The protein localises to the membrane. It participates in mycotoxin biosynthesis. Sphingosine N-acyltransferase-like protein; part of the gene cluster that mediates the biosynthesis of the host-selective toxins (HSTs) AAL-toxins, sphinganine-analog mycotoxins responsible for Alternaria stem canker on tomato by the tomato pathotype. The biosynthesis starts with the polyketide synthase ALT1-catalyzed C-16 carbon chain assembly from one starter acetyl-CoA unit with malonyl-CoA extender units. ALT1 also selectively transfers methyl groups at the first and the third cycle of chain elongation for AAL toxin. The C-16 polyketide chain is released from the enzyme by a nucleophilic attack of a carbanion, which is derived from R-carbon of glycin by decarboxylation, on the carbonyl carbon of polyketide acyl chain. This step is probably catalyzed by a pyridoxal 5'-phosphate-dependent aminoacyl transferase ALT4. The respective functions of the other enzymes encoded by the cluster have still to be elucidated. The sphingosine N-acyltransferase-like protein ALT7 seems not to act as a resistance/self-tolerance factor against the toxin in the toxin biosynthetic gene cluster, contrary to what is expected. In Alternaria alternata (Alternaria rot fungus), this protein is Sphingosine N-acyltransferase-like protein ALT7.